An 885-amino-acid polypeptide reads, in one-letter code: Cytosolic carboxypeptidase-like protein 5 (885 aa).

The region spanning 157–570 is the Peptidase M14 domain; sequence YPFSYSDCQD…AMAIAALDMA (414 aa). 2 residues coordinate Zn(2+): His252 and Glu255. Residues 343 to 402 form a disordered region; that stretch reads NSQSPSEHQHSSHLPPDAPLSDPEKADSLQNRAHLGRSSSGDKPEAWTQTEVAEQKPNSV. Positions 388–402 are enriched in polar residues; it reads AWTQTEVAEQKPNSV. Residue His434 participates in Zn(2+) binding. The Proton donor/acceptor role is filled by Glu516. 2 disordered regions span residues 605-733 and 783-839; these read TTVN…LASS and RLQA…PRPC. Polar residues predominate over residues 620-640; sequence PPRSNNGLPVSCSENTLSRAR. 2 stretches are compositionally biased toward low complexity: residues 641–666 and 714–733; these read SFSTGTSAGGSSSSQQNSPQMKNSPS and PTSSSLAPSPTPASSNLASS. The residue at position 840 (Ser840) is a Phosphoserine.

This sequence belongs to the peptidase M14 family. Zn(2+) is required as a cofactor.

It localises to the cytoplasm. It is found in the cytosol. Its subcellular location is the nucleus. The protein localises to the cytoskeleton. The protein resides in the spindle. It localises to the midbody. The enzyme catalyses gamma-L-glutamyl-L-glutamyl-[protein] + H2O = L-glutamyl-[protein] + L-glutamate. The catalysed reaction is (L-glutamyl)(n+1)-gamma-L-glutamyl-L-glutamyl-[protein] + H2O = (L-glutamyl)(n)-gamma-L-glutamyl-L-glutamyl-[protein] + L-glutamate. It catalyses the reaction C-terminal L-alpha-aminoacyl-L-glutamyl-[tubulin] + H2O = C-terminal L-alpha-aminoacyl-[tubulin] + L-glutamate. It carries out the reaction C-terminal L-alpha-aminoacyl-L-glutamyl-L-glutamyl-[tubulin] + H2O = C-terminal L-alpha-aminoacyl-L-glutamyl-[tubulin] + L-glutamate. Metallocarboxypeptidase that mediates deglutamylation of tubulin and non-tubulin target proteins. Catalyzes the removal of polyglutamate side chains present on the gamma-carboxyl group of glutamate residues within the C-terminal tail of alpha- and beta-tubulin. Cleaves alpha- and gamma-linked polyglutamate tubulin side-chain, as well as the branching point glutamate. Also catalyzes the removal of alpha-linked glutamate residues from the carboxy-terminus of alpha-tubulin. Mediates deglutamylation of nucleotidyltransferase CGAS, leading to CGAS antiviral defense response activation. The sequence is that of Cytosolic carboxypeptidase-like protein 5 (AGBL5) from Bos taurus (Bovine).